Consider the following 768-residue polypeptide: UPF0313 protein VV1_2212 (768 aa).

Positions 363–640 (AYDMIKTSVN…LHKALLRYHD (278 aa)) constitute a Radical SAM core domain. The [4Fe-4S] cluster site is built by cysteine 377, cysteine 381, and cysteine 384. Residues 674–768 (DARTPAQRRK…GGRNQPSRAR (95 aa)) form a disordered region. Residues 679–689 (AQRRKSGRHGA) are compositionally biased toward basic residues. A compositionally biased stretch (polar residues) spans 719-731 (GGQSNSAPSRSGS).

Belongs to the UPF0313 family. The cofactor is [4Fe-4S] cluster.

The protein is UPF0313 protein VV1_2212 of Vibrio vulnificus (strain CMCP6).